We begin with the raw amino-acid sequence, 130 residues long: Small ribosomal subunit protein uS11c (130 aa).

It belongs to the universal ribosomal protein uS11 family. Part of the 30S ribosomal subunit.

It localises to the plastid. The protein localises to the chloroplast. This chain is Small ribosomal subunit protein uS11c, found in Oedogonium cardiacum (Filamentous green alga).